A 324-amino-acid chain; its full sequence is tRNA uridine(34) hydroxylase (324 aa).

The 95-residue stretch at 127-221 (QQEETIVIDA…YGKDPEVQGE (95 aa)) folds into the Rhodanese domain. Residue C181 is the Cysteine persulfide intermediate of the active site.

The protein belongs to the TrhO family.

The enzyme catalyses uridine(34) in tRNA + AH2 + O2 = 5-hydroxyuridine(34) in tRNA + A + H2O. Functionally, catalyzes oxygen-dependent 5-hydroxyuridine (ho5U) modification at position 34 in tRNAs. In Bacillus cytotoxicus (strain DSM 22905 / CIP 110041 / 391-98 / NVH 391-98), this protein is tRNA uridine(34) hydroxylase.